The primary structure comprises 248 residues: MTTNTQTVDTSELAKFEAMAAEWWDPMGKFRPLHLMNPVRLDYITRQIAAEYGRDLKSPNPFKGLRILDIGCGGGLLAEPMARLGATVVGADAAEGNLPVARLHAEKSGLEIDYRHTTAEALVAAGEQFDSVLNMEVVEHVADPLAYLTACKDLLKPGGIMLCSTLNRNPKSFAMAIVGAEYVLKWLPKGTHDWRKFLTPDELTKLLEQAGLEPVDKKGMVFNPLSQQWSLSDRDLSVNYVTASIRPA.

Positions 40, 71, 92, and 135 each coordinate S-adenosyl-L-methionine.

Belongs to the methyltransferase superfamily. UbiG/COQ3 family.

It carries out the reaction a 3-demethylubiquinol + S-adenosyl-L-methionine = a ubiquinol + S-adenosyl-L-homocysteine + H(+). It catalyses the reaction a 3-(all-trans-polyprenyl)benzene-1,2-diol + S-adenosyl-L-methionine = a 2-methoxy-6-(all-trans-polyprenyl)phenol + S-adenosyl-L-homocysteine + H(+). The protein operates within cofactor biosynthesis; ubiquinone biosynthesis. Functionally, O-methyltransferase that catalyzes the 2 O-methylation steps in the ubiquinone biosynthetic pathway. The sequence is that of Ubiquinone biosynthesis O-methyltransferase from Dinoroseobacter shibae (strain DSM 16493 / NCIMB 14021 / DFL 12).